Consider the following 118-residue polypeptide: Holo-[acyl-carrier-protein] synthase (118 aa).

Mg(2+)-binding residues include aspartate 8 and glutamate 58.

Belongs to the P-Pant transferase superfamily. AcpS family. It depends on Mg(2+) as a cofactor.

The protein localises to the cytoplasm. It catalyses the reaction apo-[ACP] + CoA = holo-[ACP] + adenosine 3',5'-bisphosphate + H(+). In terms of biological role, transfers the 4'-phosphopantetheine moiety from coenzyme A to a Ser of acyl-carrier-protein. The sequence is that of Holo-[acyl-carrier-protein] synthase from Streptococcus uberis (strain ATCC BAA-854 / 0140J).